We begin with the raw amino-acid sequence, 327 residues long: Phenylalanine--tRNA ligase alpha subunit (327 aa).

Mg(2+) is bound at residue Glu252.

This sequence belongs to the class-II aminoacyl-tRNA synthetase family. Phe-tRNA synthetase alpha subunit type 1 subfamily. As to quaternary structure, tetramer of two alpha and two beta subunits. The cofactor is Mg(2+).

It is found in the cytoplasm. It catalyses the reaction tRNA(Phe) + L-phenylalanine + ATP = L-phenylalanyl-tRNA(Phe) + AMP + diphosphate + H(+). The sequence is that of Phenylalanine--tRNA ligase alpha subunit from Salmonella choleraesuis (strain SC-B67).